The following is a 317-amino-acid chain: Melanocyte-stimulating hormone receptor (317 aa).

The Extracellular portion of the chain corresponds to 1–37 (MPLQGPQRRLLGSLNSTLPATPYLGLTTNQTEPPCLE). An N-linked (GlcNAc...) asparagine glycan is attached at asparagine 29. The helical transmembrane segment at 38 to 63 (VSIPDGLFLSLGLVSLVENVLVVTAI) threads the bilayer. The Cytoplasmic segment spans residues 64 to 72 (AKNRNLHSP). The chain crosses the membrane as a helical span at residues 73–93 (MYYFICCLAVSDLLVSMSNVL). Topologically, residues 94–118 (EMAILLLLEAGVLATQASVLQQLDN) are extracellular. The chain crosses the membrane as a helical span at residues 119–140 (IIDVLICGSMVSSLCFLGSIAV). Topologically, residues 141–163 (DRYISIFYALRYHSIMMLPRVWR) are cytoplasmic. The helical transmembrane segment at 164 to 183 (AIVAIWVVSVLSSTLFIAYY) threads the bilayer. At 184 to 191 (NHTAVLLC) the chain is on the extracellular side. The chain crosses the membrane as a helical span at residues 192–211 (LVTFFVAMLVLMAVLYVHML). Topologically, residues 212–240 (ARACQHARGIARLHKRQHPIHQGFGLKGA) are cytoplasmic. The chain crosses the membrane as a helical span at residues 241-266 (ATLTILLGVFFLCWGPFFLHLSLLIL). The Extracellular segment spans residues 267-279 (CPQHPTCGCVFKN). The chain crosses the membrane as a helical span at residues 280-300 (FKLFLTLILCSAIVDPLIYAF). Topologically, residues 301–317 (RSQELRKTLQEVLLCSW) are cytoplasmic. Cysteine 315 carries the S-palmitoyl cysteine lipid modification.

The protein belongs to the G-protein coupled receptor 1 family. Interacts with MGRN1, but does not undergo MGRN1-mediated ubiquitination; this interaction competes with GNAS-binding and thus inhibits agonist-induced cAMP production. Interacts with OPN3; the interaction results in a decrease in MC1R-mediated cAMP signaling and ultimately a decrease in melanin production in melanocytes.

It localises to the cell membrane. Receptor for MSH (alpha, beta and gamma) and ACTH. The activity of this receptor is mediated by G proteins which activate adenylate cyclase. Mediates melanogenesis, the production of eumelanin (black/brown) and phaeomelanin (red/yellow), via regulation of cAMP signaling in melanocytes. In Equus caballus (Horse), this protein is Melanocyte-stimulating hormone receptor (MC1R).